The following is a 182-amino-acid chain: Ribosome maturation factor RimM (182 aa).

The 80-residue stretch at 103–182 (VGDYYWKDLI…TIEVDWDPGF (80 aa)) folds into the PRC barrel domain.

It belongs to the RimM family. In terms of assembly, binds ribosomal protein uS19.

It localises to the cytoplasm. Functionally, an accessory protein needed during the final step in the assembly of 30S ribosomal subunit, possibly for assembly of the head region. Essential for efficient processing of 16S rRNA. May be needed both before and after RbfA during the maturation of 16S rRNA. It has affinity for free ribosomal 30S subunits but not for 70S ribosomes. The sequence is that of Ribosome maturation factor RimM from Pectobacterium atrosepticum (strain SCRI 1043 / ATCC BAA-672) (Erwinia carotovora subsp. atroseptica).